Reading from the N-terminus, the 323-residue chain is Muscleblind-like protein 3 (323 aa).

C3H1-type zinc fingers lie at residues W13–R41, N47–P73, T177–E205, and E213–A239.

Belongs to the muscleblind family. Expressed in fast and slow myotomal muscle, heart, liver, skin, brain and testis.

Its subcellular location is the nucleus. It is found in the cytoplasm. Its function is as follows. Involved in pre-mRNA alternative splicing regulation. Could inhibit terminal muscle differentiation, acting at approximately the time of myogenin induction. The polypeptide is Muscleblind-like protein 3 (mbnl3) (Takifugu rubripes (Japanese pufferfish)).